Here is a 114-residue protein sequence, read N- to C-terminus: MGPGLLCWALLCLLGAGSVETGVTQSPTHLIKTRGQQVTLRCSSQSGHNTVSWYQQALGQGPQFIFQYYREEENGRGNFPPRFSGLQFPNYSSELNVNALELDDSALYLCASSL.

A signal peptide spans 1 to 21; that stretch reads MGPGLLCWALLCLLGAGSVET. An Ig-like domain is found at 22–114; that stretch reads GVTQSPTHLI…SALYLCASSL (93 aa). Cysteine 42 and cysteine 110 are joined by a disulfide. The N-linked (GlcNAc...) asparagine glycan is linked to asparagine 90.

Alpha-beta TR is a heterodimer composed of an alpha and beta chain; disulfide-linked. The alpha-beta TR is associated with the transmembrane signaling CD3 coreceptor proteins to form the TR-CD3 (TcR or TCR). The assembly of alpha-beta TR heterodimers with CD3 occurs in the endoplasmic reticulum where a single alpha-beta TR heterodimer associates with one CD3D-CD3E heterodimer, one CD3G-CD3E heterodimer and one CD247 homodimer forming a stable octameric structure. CD3D-CD3E and CD3G-CD3E heterodimers preferentially associate with TR alpha and TR beta chains, respectively. The association of the CD247 homodimer is the last step of TcR assembly in the endoplasmic reticulum and is required for transport to the cell surface.

Its subcellular location is the cell membrane. In terms of biological role, v region of the variable domain of T cell receptor (TR) beta chain that participates in the antigen recognition. Alpha-beta T cell receptors are antigen specific receptors which are essential to the immune response and are present on the cell surface of T lymphocytes. Recognize peptide-major histocompatibility (MH) (pMH) complexes that are displayed by antigen presenting cells (APC), a prerequisite for efficient T cell adaptive immunity against pathogens. Binding of alpha-beta TR to pMH complex initiates TR-CD3 clustering on the cell surface and intracellular activation of LCK that phosphorylates the ITAM motifs of CD3G, CD3D, CD3E and CD247 enabling the recruitment of ZAP70. In turn ZAP70 phosphorylates LAT, which recruits numerous signaling molecules to form the LAT signalosome. The LAT signalosome propagates signal branching to three major signaling pathways, the calcium, the mitogen-activated protein kinase (MAPK) kinase and the nuclear factor NF-kappa-B (NF-kB) pathways, leading to the mobilization of transcription factors that are critical for gene expression and essential for T cell growth and differentiation. The T cell repertoire is generated in the thymus, by V-(D)-J rearrangement. This repertoire is then shaped by intrathymic selection events to generate a peripheral T cell pool of self-MH restricted, non-autoaggressive T cells. Post-thymic interaction of alpha-beta TR with the pMH complexes shapes TR structural and functional avidity. The protein is T cell receptor beta variable 5-4 of Homo sapiens (Human).